A 319-amino-acid chain; its full sequence is MAVNGSALSSGLIVSFGEMLIDFVPTVSGVSLAEAPGFLKAPGGAPANVAIAVTRLGGKSAFVGKLGDDEFGHMLAGILKTNGVQADGINFDKGARTALAFVTLRADGEREFMFYRNPSADMLLTPDELNLDLIRSAKVFHYGSISLIVEPCRSAHLKAMEVAKEAGALLSYDPNLRLPLWSSEAEARKAIKVSDVELEFLTGSDKIDDESAMSLWHPNLKLLLVTLGEKGCNYYTKKFHGSVGGFHVKTVDTTGAGDSFVGALLTKIVDDQAILEDEARLKEVLRFSCACGAITTTKKGAIPALPTESEALTLLKGGA.

The protein belongs to the carbohydrate kinase PfkB family. As to expression, expressed in swelling stolons and, at higher levels, in developing tubers. Low levels found in leaves and stems from tuberizing plants.

The catalysed reaction is D-fructose + ATP = D-fructose 6-phosphate + ADP + H(+). Its pathway is glycan biosynthesis; starch biosynthesis. Its function is as follows. May play an important role in maintaining the flux of carbon towards starch formation. The sequence is that of Fructokinase from Solanum tuberosum (Potato).